We begin with the raw amino-acid sequence, 479 residues long: Phosphatidylinositol 4-kinase type 2-alpha (479 aa).

The residue at position 1 (M1) is an N-acetylmethionine. The segment at 1 to 58 (MDETSPLVSPERAQPPEYTFPSGSGAHFPQVPGGAVRVAAAAGSGPSPPCSPGHDRER) is disordered. Residues S5, S9, S44, S47, and S51 each carry the phosphoserine modification. Residues 31–45 (VPGGAVRVAAAAGSG) show a composition bias toward low complexity. A PI3K/PI4K catalytic domain is found at 124 to 453 (SIYPERIYQG…VQMPPVIVET (330 aa)). Residues 130-136 (IYQGSSG) are G-loop. ATP-binding positions include 131 to 137 (YQGSSGS) and K152. The interval 157-159 (EPY) is important for substrate binding. An important for interaction with membranes region spans residues 165-178 (KWTKWLQKLCCPCC). Residues C174, C175, C177, and C178 are each lipidated (S-palmitoyl cysteine). 261–264 (QLFV) is an ATP binding site. Residues 268 to 276 (KDADYWLRR) are important for interaction with membranes. The tract at residues 305–313 (RNTDRGNDN) is catalytic loop. The activation loop stretch occupies residues 344 to 364 (AIDNGLAFPLKHPDSWRAYPF). ATP is bound at residue D346. The interval 359–368 (WRAYPFYWAW) is important for interaction with membranes. S462 carries the post-translational modification Phosphoserine.

Belongs to the PI3/PI4-kinase family. Type II PI4K subfamily. As to quaternary structure, associates with the BLOC-1 and the AP-3 complexes; the BLOC-1 complex is required for optimal binding of PI4K2A to the AP-3 complex. Interacts with BLOC1S5 and DTNBP1. Interacts with ITCH. Interacts with FOS; this interaction may enhance phosphatidylinositol phosphorylation activity. Interacts with ATG9A. Palmitoylated by ZDHHC3 and ZDHHC7 in the CCPCC motif. Palmitoylation is cholesterol-dependent, and required for TGN localization. Post-translationally, ubiquitinated by ITCH; this does not lead to proteasomal degradation. Detected in brain (at protein level).

The protein localises to the golgi apparatus. Its subcellular location is the trans-Golgi network membrane. It is found in the membrane raft. It localises to the endosome. The protein resides in the endosome membrane. The protein localises to the cytoplasmic vesicle. Its subcellular location is the cell projection. It is found in the dendrite. It localises to the presynaptic cell membrane. The protein resides in the synapse. The protein localises to the synaptosome. Its subcellular location is the mitochondrion. It is found in the membrane. It localises to the cell membrane. The protein resides in the perikaryon. The protein localises to the neuron projection. The catalysed reaction is a 1,2-diacyl-sn-glycero-3-phospho-(1D-myo-inositol) + ATP = a 1,2-diacyl-sn-glycero-3-phospho-(1D-myo-inositol 4-phosphate) + ADP + H(+). Its function is as follows. Membrane-bound phosphatidylinositol-4 kinase (PI4-kinase) that catalyzes the phosphorylation of phosphatidylinositol (PI) to phosphatidylinositol 4-phosphate (PI4P), a lipid that plays important roles in endocytosis, Golgi function, protein sorting and membrane trafficking and is required for prolonged survival of neurons. Besides, phosphorylation of phosphatidylinositol (PI) to phosphatidylinositol 4-phosphate (PI4P) is the first committed step in the generation of phosphatidylinositol 4,5-bisphosphate (PIP2), a precursor of the second messenger inositol 1,4,5-trisphosphate (InsP3). The chain is Phosphatidylinositol 4-kinase type 2-alpha (Pi4k2a) from Mus musculus (Mouse).